The sequence spans 287 residues: Festuclavine synthase II (287 aa).

It belongs to the fgaFS/easG family.

It carries out the reaction festuclavine + NAD(+) = 6,8-dimethyl-6,7-didehydroergoline + NADH + H(+). Its pathway is alkaloid biosynthesis; ergot alkaloid biosynthesis. Functionally, festuclavine synthase; part of the gene cluster that mediates the biosynthesis of isofumigaclavines, fungal ergot alkaloids. The tryptophan dimethylallyltransferase ifgA catalyzes the first step of ergot alkaloid biosynthesis by condensing dimethylallyl diphosphate (DMAP) and tryptophan to form 4-dimethylallyl-L-tryptophan. The second step is catalyzed by the methyltransferase ifgB that methylates 4-dimethylallyl-L-tryptophan in the presence of S-adenosyl-L-methionine, resulting in the formation of N-methyl-dimethylallyl-L-tryptophan. The catalase ifgD and the FAD-dependent oxidoreductase ifgC then transform N-methyl-dimethylallyl-L-tryptophan to chanoclavine-I which is further oxidized by ifgE in the presence of NAD(+), resulting in the formation of chanoclavine-I aldehyde. The chanoclavine-I aldehyde reductases ifgG and/or fgaOx3 reduce chanoclavine-I aldehyde to dihydrochanoclavine-I aldehyde that spontaneously dehydrates to form 6,8-dimethyl-6,7-didehydroergoline. The festuclavine dehydrogenases ifgF1 and/or ifgF2 then catalyze the reduction of 6,8-dimethyl-6,7-didehydroergoline to form festuclavine. Hydrolysis of festuclavine by a yet undetermined cytochrome P450 monooxygenase (called ifgH) then leads to the formation of isofumigaclavine B which is in turn acetylated by ifgI to isofumigaclavine A. Penicillium roqueforti has interestingly at least two sets of genes for the consumption of chanoclavine-I aldehyde on three different loci, the OYEs ifgG/fgaOx3 and the festuclavine synthase homologs ifgF1/ifgF2. The reason for the duplication of these genes is unclear, probably to ensure the conversion of chanoclavine-I aldehyde by differential gene expression under various environmental conditions. This is Festuclavine synthase II from Penicillium roqueforti (strain FM164).